The following is a 221-amino-acid chain: Germin-like protein subfamily 1 member 19 (221 aa).

An N-terminal signal peptide occupies residues 1–21 (MKVSMSLILITLSALVTIAKA). Cysteine 31 and cysteine 48 are joined by a disulfide. Residues 76 to 213 (SNVTTVNVDQ…AFQLDVNVVK (138 aa)) enclose the Cupin type-1 domain. Asparagine 77 carries N-linked (GlcNAc...) asparagine glycosylation. Mn(2+) is bound by residues histidine 110, histidine 112, glutamate 117, and histidine 159.

This sequence belongs to the germin family. As to quaternary structure, oligomer (believed to be a pentamer but probably hexamer).

It localises to the secreted. The protein localises to the extracellular space. Its subcellular location is the apoplast. In terms of biological role, may play a role in plant defense. Probably has no oxalate oxidase activity even if the active site is conserved. This is Germin-like protein subfamily 1 member 19 from Arabidopsis thaliana (Mouse-ear cress).